A 150-amino-acid chain; its full sequence is Glycophorin-A (150 aa).

The signal sequence occupies residues 1–19 (MYGKIIFVLLLSEIVSISA). Over 20-91 (LSTTEVAMHT…QLAHHFSEPE (72 aa)) the chain is Extracellular. Residue serine 21 is glycosylated (O-linked (GalNAc...) serine). O-linked (GalNAc...) threonine glycosylation is found at threonine 22, threonine 23, and threonine 29. Serine 30 carries O-linked (GalNAc...) serine glycosylation. An O-linked (GalNAc...) threonine glycan is attached at threonine 31. A glycan (O-linked (GalNAc...) serine) is linked at serine 32. O-linked (GalNAc...) threonine glycosylation occurs at threonine 36. O-linked (GalNAc...) serine glycosylation is found at serine 38 and serine 41. Threonine 44 carries an O-linked (GalNAc...) threonine glycan. N-linked (GlcNAc...) asparagine glycosylation is present at asparagine 45. O-linked (GalNAc...) threonine glycans are attached at residues threonine 52 and threonine 56. 2 O-linked (GalNAc...) serine glycosylation sites follow: serine 63 and serine 66. O-linked (GalNAc...) threonine glycosylation occurs at threonine 69. A helical transmembrane segment spans residues 92–114 (ITLIIFGVMAGVIGTILLISYGI). Residues 115–150 (RRLIKKSPSDVKPLPSPDTDVPLSSVEIENPETSDQ) lie on the Cytoplasmic side of the membrane. Residues 121–150 (SPSDVKPLPSPDTDVPLSSVEIENPETSDQ) form a disordered region. Phosphothreonine is present on threonine 133. Phosphoserine is present on residues serine 138 and serine 148.

This sequence belongs to the glycophorin A family. As to quaternary structure, homodimer. Component of the ankyrin-1 complex in the erythrocyte, composed of ANK1, RHCE, RHAG, SLC4A1, EPB42, GYPA, GYPB and AQP1. Interacts with SLC4A1; a GYPA monomer is bound at each end of the SLC4A1 dimer forming a heterotetramer. (Microbial infection) Interacts with Streptococcus gordonii hsa protein. In terms of assembly, (Microbial infection) Interacts (in a sialic acid-independent manner) with P.falciparum MSP1 subunit p83. In terms of processing, the major O-linked glycan are NeuAc-alpha-(2-3)-Gal-beta-(1-3)-[NeuAc-alpha-(2-6)]-GalNAcOH (about 78 %) and NeuAc-alpha-(2-3)-Gal-beta-(1-3)-GalNAcOH (17 %). Minor O-glycans (5 %) include NeuAc-alpha-(2-3)-Gal-beta-(1-3)-[NeuAc-alpha-(2-6)]-GalNAcOH NeuAc-alpha-(2-8)-NeuAc-alpha-(2-3)-Gal-beta-(1-3)-GalNAcOH. About 1% of all O-linked glycans carry blood group A, B and H determinants. They derive from a type-2 precursor core structure, Gal-beta-(1,3)-GlcNAc-beta-1-R, and the antigens are synthesized by addition of fucose (H antigen-specific) and then N-acetylgalactosamine (A antigen-specific) or galactose (B antigen-specific). Specifically O-linked-glycans are NeuAc-alpha-(2-3)-Gal-beta-(1-3)-GalNAcOH-(6-1)-GlcNAc-beta-(4-1)-[Fuc-alpha-(1-2)]-Gal-beta-(3-1)-GalNAc-alpha (about 1%, B antigen-specific) and NeuAc-alpha-(2-3)-Gal-beta-(1-3)-GalNAcOH-(6-1)-GlcNAc-beta-(4-1)-[Fuc-alpha-(1-2)]-Gal-beta (1 %, O antigen-, A antigen- and B antigen-specific).

It localises to the cell membrane. Its function is as follows. Component of the ankyrin-1 complex, a multiprotein complex involved in the stability and shape of the erythrocyte membrane. Glycophorin A is the major intrinsic membrane protein of the erythrocyte. The N-terminal glycosylated segment, which lies outside the erythrocyte membrane, has MN blood group receptors. Appears to be important for the function of SLC4A1 and is required for high activity of SLC4A1. May be involved in translocation of SLC4A1 to the plasma membrane. Functionally, (Microbial infection) Appears to be a receptor for Hepatitis A virus (HAV). In terms of biological role, (Microbial infection) Receptor for P.falciparum erythrocyte-binding antigen 175 (EBA-175); binding of EBA-175 is dependent on sialic acid residues of the O-linked glycans. The protein is Glycophorin-A of Homo sapiens (Human).